Reading from the N-terminus, the 450-residue chain is Molybdate-anion transporter (450 aa).

Transmembrane regions (helical) follow at residues 1–21 (MLVTAYLAFVGLLASCLGLEL), 43–63 (LDFYQVYFLALAADWLQAPYL), 79–99 (ILYVCGLASTVLFGLVASSLV), 128–148 (FVLLVGRALGGLSTALLFSAF), 174–194 (AAFWNHVLAVVAGVAAEAVAS), 195–215 (WIGLGPVAPFVAAIPLLALAG), 249–269 (VLLLGTIQALFESVIFIFVFL), 278–298 (GAPLGIVFSSFMAASLLGSSL), 311–331 (PMHLLSLAVLIVVFSLFMLTF), 344–364 (FIAFLLIELACGLYFPSMSFL), 376–396 (GVLNWFRVPLHLLACLGLLVL), and 409–429 (FSICSAVMVMALLAVVGLFTV).

It belongs to the major facilitator superfamily.

The protein localises to the cell membrane. Mediates high-affinity intracellular uptake of the rare oligo-element molybdenum. The protein is Molybdate-anion transporter (MFSD5) of Pongo abelii (Sumatran orangutan).